The primary structure comprises 371 residues: tRNA (guanine(26)-N(2))-dimethyltransferase (371 aa).

The region spanning 4–368 (VEVTEGRTRF…APLPVLEKVV (365 aa)) is the Trm1 methyltransferase domain. Residues arginine 41, arginine 66, aspartate 82, aspartate 108, and alanine 109 each contribute to the S-adenosyl-L-methionine site. Zn(2+)-binding residues include cysteine 237, cysteine 240, cysteine 256, and cysteine 259.

The protein belongs to the class I-like SAM-binding methyltransferase superfamily. Trm1 family.

It carries out the reaction guanosine(26) in tRNA + 2 S-adenosyl-L-methionine = N(2)-dimethylguanosine(26) in tRNA + 2 S-adenosyl-L-homocysteine + 2 H(+). Its function is as follows. Dimethylates a single guanine residue at position 26 of a number of tRNAs using S-adenosyl-L-methionine as donor of the methyl groups. The polypeptide is tRNA (guanine(26)-N(2))-dimethyltransferase (Methanoculleus marisnigri (strain ATCC 35101 / DSM 1498 / JR1)).